A 922-amino-acid chain; its full sequence is ATP-dependent helicase fft3 (922 aa).

Disordered stretches follow at residues 139-177 (EPKM…APHR) and 198-224 (PLSS…DDSN). A compositionally biased stretch (low complexity) spans 153–166 (DSLPLSLSSQSLSS). A compositionally biased stretch (acidic residues) spans 207 to 223 (PEADDDSNDDMYSDDDS). 2 positions are modified to phosphoserine: serine 213 and serine 219. A Helicase ATP-binding domain is found at 399-567 (YLLYELKLAG…ISLLAFILPH (169 aa)). 412–419 (DEMGLGKT) serves as a coordination point for ATP. The DEGH box signature appears at 518–521 (DEGH). At serine 617 the chain carries Phosphoserine. A Helicase C-terminal domain is found at 765-922 (KLKKLLTNAV…ETVEAEDDDD (158 aa)).

This sequence belongs to the SNF2/RAD54 helicase family. Interacts with the GDP-bound form of spi1.

The protein localises to the nucleus. The protein resides in the chromosome. The catalysed reaction is ATP + H2O = ADP + phosphate + H(+). Functionally, DNA helicase that possesses intrinsic ATP-dependent nucleosome-remodeling activity and is required for heterochromatin organization. Required for maintaining a heterochromatin chromatin structure at centromeres and subtelomeres by protecting these regions from euchromatin assembly. Enhances the nucleotide exchange activity of the pim1 guanine nucleotide exchange factor and abolishes histone-H3-mediated RanGAP inhibition. Involved in the construction of the centromeres. This is ATP-dependent helicase fft3 (fft3) from Schizosaccharomyces pombe (strain 972 / ATCC 24843) (Fission yeast).